Reading from the N-terminus, the 249-residue chain is Triosephosphate isomerase (249 aa).

Residues N12 and K14 each coordinate substrate. An N6-acetyllysine modification is found at K14. Y68 is modified (3'-nitrotyrosine). The residue at position 80 (S80) is a Phosphoserine. Residue H96 is the Electrophile of the active site. S106 is modified (phosphoserine). K142 is covalently cross-linked (Glycyl lysine isopeptide (Lys-Gly) (interchain with G-Cter in SUMO1)). At K149 the chain carries N6-succinyllysine. K156 is subject to N6-acetyllysine; alternate. K156 bears the N6-succinyllysine; alternate mark. Residue S159 is modified to Phosphoserine. The active-site Proton acceptor is the E166. A Phosphothreonine modification is found at T173. K194 carries the N6-acetyllysine; alternate modification. K194 is subject to N6-succinyllysine; alternate. The residue at position 194 (K194) is an N6-methyllysine; alternate. S198 is subject to Phosphoserine. Position 209 is a 3'-nitrotyrosine (Y209). S212 is modified (phosphoserine). The residue at position 214 (T214) is a Phosphothreonine. The residue at position 223 (S223) is a Phosphoserine. K238 is subject to N6-acetyllysine.

This sequence belongs to the triosephosphate isomerase family. As to quaternary structure, homodimer.

The protein localises to the cytoplasm. It carries out the reaction dihydroxyacetone phosphate = methylglyoxal + phosphate. The catalysed reaction is D-glyceraldehyde 3-phosphate = dihydroxyacetone phosphate. It participates in carbohydrate degradation; glycolysis; D-glyceraldehyde 3-phosphate from glycerone phosphate: step 1/1. It functions in the pathway carbohydrate biosynthesis; gluconeogenesis. Functionally, triosephosphate isomerase is an extremely efficient metabolic enzyme that catalyzes the interconversion between dihydroxyacetone phosphate (DHAP) and D-glyceraldehyde-3-phosphate (G3P) in glycolysis and gluconeogenesis. It is also responsible for the non-negligible production of methylglyoxal a reactive cytotoxic side-product that modifies and can alter proteins, DNA and lipids. The polypeptide is Triosephosphate isomerase (TPI1) (Gorilla gorilla gorilla (Western lowland gorilla)).